The chain runs to 144 residues: Large-conductance mechanosensitive channel (144 aa).

The next 2 helical transmembrane spans lie at 14-34 and 81-101; these read VLDM…VTSF and GTFL…FLII.

This sequence belongs to the MscL family. In terms of assembly, homopentamer.

Its subcellular location is the cell inner membrane. Channel that opens in response to stretch forces in the membrane lipid bilayer. May participate in the regulation of osmotic pressure changes within the cell. The polypeptide is Large-conductance mechanosensitive channel (Bdellovibrio bacteriovorus (strain ATCC 15356 / DSM 50701 / NCIMB 9529 / HD100)).